The following is a 745-amino-acid chain: Phosphoribosylformylglycinamidine synthase subunit PurL (745 aa).

The active site involves H47. 2 residues coordinate ATP: Y50 and K90. A Mg(2+)-binding site is contributed by E92. Substrate-binding positions include 93–96 (SHNH) and R115. Catalysis depends on H94, which acts as the Proton acceptor. D116 lines the Mg(2+) pocket. Q240 is a binding site for substrate. D268 contacts Mg(2+). Position 312–314 (312–314 (ESQ)) interacts with substrate. ATP is bound by residues N501 and G538. N539 contacts Mg(2+). Residue S541 coordinates substrate.

This sequence belongs to the FGAMS family. As to quaternary structure, monomer. Part of the FGAM synthase complex composed of 1 PurL, 1 PurQ and 2 PurS subunits.

Its subcellular location is the cytoplasm. It carries out the reaction N(2)-formyl-N(1)-(5-phospho-beta-D-ribosyl)glycinamide + L-glutamine + ATP + H2O = 2-formamido-N(1)-(5-O-phospho-beta-D-ribosyl)acetamidine + L-glutamate + ADP + phosphate + H(+). It participates in purine metabolism; IMP biosynthesis via de novo pathway; 5-amino-1-(5-phospho-D-ribosyl)imidazole from N(2)-formyl-N(1)-(5-phospho-D-ribosyl)glycinamide: step 1/2. Its function is as follows. Part of the phosphoribosylformylglycinamidine synthase complex involved in the purines biosynthetic pathway. Catalyzes the ATP-dependent conversion of formylglycinamide ribonucleotide (FGAR) and glutamine to yield formylglycinamidine ribonucleotide (FGAM) and glutamate. The FGAM synthase complex is composed of three subunits. PurQ produces an ammonia molecule by converting glutamine to glutamate. PurL transfers the ammonia molecule to FGAR to form FGAM in an ATP-dependent manner. PurS interacts with PurQ and PurL and is thought to assist in the transfer of the ammonia molecule from PurQ to PurL. The sequence is that of Phosphoribosylformylglycinamidine synthase subunit PurL from Leptospira interrogans serogroup Icterohaemorrhagiae serovar Lai (strain 56601).